Consider the following 346-residue polypeptide: MNTDSHNLSEPYNIGGQKYINMKKKEDLGVCQPGLTQKAFTVEDKFDYKAIIEKMEVYGLCVVKNFIETSRCDEILKEIEPHFYRYESWQGSPFPKETTVATRSVLHSSTVLKDVVCDRMFCDISKHFLNEENYFAAGKVINKCTSDIQLNSGIVYKVGAGASDQGYHREDIVHHTTHQACERFQYGTETMVGLGVAFTDMNKENGSTRMIVGSHLWGPHDSCGNFDKRMEFHVNVAKGDAVLFLGSLYHAASANRTSQDRVAGYFFMTKSYLKPEENLHLGTDLRVFKGLPLEALQLLGLGISEPFCGHIDYKSPGHLISSSLFENDIEKGYYGETIRVNYGSTQ.

This sequence belongs to the PhyH family.

The protein localises to the cytoplasm. This is an uncharacterized protein from Saccharomyces cerevisiae (strain ATCC 204508 / S288c) (Baker's yeast).